The chain runs to 421 residues: MSNDKGLEEIPEDQSTTPHKPTSNVGSRLTRLFQSTGQIETNYDEITDSFDAMELKPELLRGVYAYGFERPSAIQQRAIKPIIKGSDVIAQAQSGTGKTATFSISALQKLDPNVKGCQALILAPTRELAQQIQKVVVAIGDFMNITCHACIGGTAVREDMKALGEGPEVVVGTPGRVHDMIQRRVLKTDHLKQFILDEADEMLSRGFTEQIYDIFQLLPQSTQVVLLSATMPQDVLEVTTKFMRDPVRILVKKQELTLEGIKQFYIAVEKEEWKLDTLSDLYETVTITQAVIFCNTRRKVDWLTDKLTARDFTVSAMHGDMEQSQRDVIMKEFRSGSSRVLIATDLLARGIDVQQVSLVINYDLPANRENYIHRIGRGGRFGRKGVAINFVTADDVRMMREIEQFYSTQIEEMPMNVADLI.

Positions 1–26 are disordered; that stretch reads MSNDKGLEEIPEDQSTTPHKPTSNVG. Positions 13 to 26 are enriched in polar residues; the sequence is DQSTTPHKPTSNVG. Positions 48-76 match the Q motif motif; that stretch reads DSFDAMELKPELLRGVYAYGFERPSAIQQ. A Helicase ATP-binding domain is found at 79-249; the sequence is IKPIIKGSDV…TKFMRDPVRI (171 aa). 92-99 contacts ATP; sequence AQSGTGKT. The DEAD box signature appears at 197-200; that stretch reads DEAD. Positions 260–421 constitute a Helicase C-terminal domain; it reads GIKQFYIAVE…EMPMNVADLI (162 aa).

Belongs to the DEAD box helicase family. eIF4A subfamily. As to quaternary structure, component of the eIF4F complex, which composition varies with external and internal environmental conditions. It is composed of at least eIF4A, eIF4E and eIF4G.

It is found in the cytoplasm. The catalysed reaction is ATP + H2O = ADP + phosphate + H(+). Functionally, ATP-dependent RNA helicase which is a subunit of the eIF4F complex involved in cap recognition and is required for mRNA binding to ribosome. In the current model of translation initiation, eIF4A unwinds RNA secondary structures in the 5'-UTR of mRNAs which is necessary to allow efficient binding of the small ribosomal subunit, and subsequent scanning for the initiator codon. This chain is ATP-dependent RNA helicase eIF4A (tif1), found in Aspergillus oryzae (strain ATCC 42149 / RIB 40) (Yellow koji mold).